Here is a 480-residue protein sequence, read N- to C-terminus: DNA repair protein RadA (480 aa).

The C4-type zinc finger occupies 10–27 (CSECRHVSAKWVGRCLEC). An ATP-binding site is contributed by 95-102 (GDPGVGKS). The RadA KNRFG motif motif lies at 254–258 (KNRFG). Positions 353–480 (DIYLSTVGGM…TGHVPLGRGT (128 aa)) are lon-protease-like. Positions 459–480 (GTTLATPPSHSGTGHVPLGRGT) are disordered. The span at 461-470 (TLATPPSHSG) shows a compositional bias: polar residues.

This sequence belongs to the RecA family. RadA subfamily.

Its function is as follows. DNA-dependent ATPase involved in processing of recombination intermediates, plays a role in repairing DNA breaks. Stimulates the branch migration of RecA-mediated strand transfer reactions, allowing the 3' invading strand to extend heteroduplex DNA faster. Binds ssDNA in the presence of ADP but not other nucleotides, has ATPase activity that is stimulated by ssDNA and various branched DNA structures, but inhibited by SSB. Does not have RecA's homology-searching function. The sequence is that of DNA repair protein RadA from Mycobacterium tuberculosis (strain CDC 1551 / Oshkosh).